The chain runs to 193 residues: MSVIPMVVEQTSRGERSYDIYSRLLKERVIFLTGEVEDRMANLIVAQLLFLEAEDPAKDINIYINSPGGSVTAGMAIYDTMQFIKPNVRTLCIGQACSMGAFLLAGGTAGKRAALPHARVMIHQPLGGFRGQASDIQIHAQEILKIKQTLNERLAFHTGQSIEQIEQDTDRDNFMSAEQAKLYGLVDDVLIKR.

The Nucleophile role is filled by S98. H123 is a catalytic residue.

It belongs to the peptidase S14 family. Fourteen ClpP subunits assemble into 2 heptameric rings which stack back to back to give a disk-like structure with a central cavity, resembling the structure of eukaryotic proteasomes.

Its subcellular location is the cytoplasm. It carries out the reaction Hydrolysis of proteins to small peptides in the presence of ATP and magnesium. alpha-casein is the usual test substrate. In the absence of ATP, only oligopeptides shorter than five residues are hydrolyzed (such as succinyl-Leu-Tyr-|-NHMec, and Leu-Tyr-Leu-|-Tyr-Trp, in which cleavage of the -Tyr-|-Leu- and -Tyr-|-Trp bonds also occurs).. Its function is as follows. Cleaves peptides in various proteins in a process that requires ATP hydrolysis. Has a chymotrypsin-like activity. Plays a major role in the degradation of misfolded proteins. This is ATP-dependent Clp protease proteolytic subunit from Histophilus somni (strain 2336) (Haemophilus somnus).